Here is a 272-residue protein sequence, read N- to C-terminus: uncharacterized protein (272 aa).

Lysine 185 acts as the Schiff-base intermediate with substrate in catalysis.

It belongs to the DeoC/FbaB aldolase family.

This is an uncharacterized protein from Saccharolobus solfataricus (strain ATCC 35092 / DSM 1617 / JCM 11322 / P2) (Sulfolobus solfataricus).